The following is a 120-amino-acid chain: MLITVLKSKIHNARVTVCNVDYEGSLSLDEELIKQANLRPYEKVLVANVTNGERFETYIIPAPANSREVGLNGAAARSAVVGDRVIVMAFAMKEPDEEVDTTVLIMDEENNIKEVKKLKA.

Ser-25 serves as the catalytic Schiff-base intermediate with substrate; via pyruvic acid. Ser-25 is subject to Pyruvic acid (Ser). Thr-57 is a binding site for substrate. Tyr-58 serves as the catalytic Proton donor. Residue 73–75 (GAA) participates in substrate binding.

It belongs to the PanD family. Heterooctamer of four alpha and four beta subunits. Pyruvate serves as cofactor. Post-translationally, is synthesized initially as an inactive proenzyme, which is activated by self-cleavage at a specific serine bond to produce a beta-subunit with a hydroxyl group at its C-terminus and an alpha-subunit with a pyruvoyl group at its N-terminus.

It localises to the cytoplasm. It carries out the reaction L-aspartate + H(+) = beta-alanine + CO2. It functions in the pathway cofactor biosynthesis; (R)-pantothenate biosynthesis; beta-alanine from L-aspartate: step 1/1. Functionally, catalyzes the pyruvoyl-dependent decarboxylation of aspartate to produce beta-alanine. The protein is Aspartate 1-decarboxylase of Coprothermobacter proteolyticus (strain ATCC 35245 / DSM 5265 / OCM 4 / BT).